Here is a 131-residue protein sequence, read N- to C-terminus: Lactose permease (131 aa).

Over 1 to 13 (MKFSELAPRERHN) the chain is Cytoplasmic. Residues 14-34 (FVYFLLFFFFYHFIMSAYFPF) traverse the membrane as a helical segment. Over 35 to 50 (FPVWLADVNHLTKTET) the chain is Periplasmic. A helical membrane pass occupies residues 51–71 (GIVFSSISLFAIIFQPVFGLM). Topologically, residues 72–80 (SDKLGLRKH) are cytoplasmic. Residues 81–101 (LLWTITVLLILFAPFFIFVFS) form a helical membrane-spanning segment. Pro102 is a topological domain (periplasmic). The helical transmembrane segment at 103-123 (LLQMNIIAGSLVGGIYLGIVF) threads the bilayer. The Cytoplasmic segment spans residues 124-131 (STAPGVGS).

Belongs to the major facilitator superfamily. Oligosaccharide:H(+) symporter (OHS) (TC 2.A.1.5) family.

It is found in the cell inner membrane. The enzyme catalyses lactose(in) + H(+)(in) = lactose(out) + H(+)(out). Responsible for transport of beta-galactosides into the cell, with the concomitant import of a proton (symport system). In Klebsiella pneumoniae, this protein is Lactose permease (lacY).